Reading from the N-terminus, the 168-residue chain is Transcription antitermination protein NusB (168 aa).

A disordered region spans residues 147 to 168 (RGLINNSSRNTSRSEEKHSTEK). Residues 158–168 (SRSEEKHSTEK) are compositionally biased toward basic and acidic residues.

Belongs to the NusB family.

Involved in transcription antitermination. Required for transcription of ribosomal RNA (rRNA) genes. Binds specifically to the boxA antiterminator sequence of the ribosomal RNA (rrn) operons. The protein is Transcription antitermination protein NusB of Chlorobium phaeobacteroides (strain BS1).